The following is a 509-amino-acid chain: 2-isopropylmalate synthase (509 aa).

Positions Ile-5–Lys-267 constitute a Pyruvate carboxyltransferase domain. The Mn(2+) site is built by Asp-14, His-202, His-204, and Asn-238. The regulatory domain stretch occupies residues Lys-391–Asn-509.

It belongs to the alpha-IPM synthase/homocitrate synthase family. LeuA type 1 subfamily. As to quaternary structure, homodimer. The cofactor is Mn(2+).

Its subcellular location is the cytoplasm. It catalyses the reaction 3-methyl-2-oxobutanoate + acetyl-CoA + H2O = (2S)-2-isopropylmalate + CoA + H(+). The protein operates within amino-acid biosynthesis; L-leucine biosynthesis; L-leucine from 3-methyl-2-oxobutanoate: step 1/4. Functionally, catalyzes the condensation of the acetyl group of acetyl-CoA with 3-methyl-2-oxobutanoate (2-ketoisovalerate) to form 3-carboxy-3-hydroxy-4-methylpentanoate (2-isopropylmalate). In Staphylococcus aureus (strain USA300), this protein is 2-isopropylmalate synthase.